The chain runs to 364 residues: Transcription factor TGA4 (364 aa).

The segment at 39–79 (PGSIIIPTNEKPDSLSEDTSHGTEGTPHKFDQEASTSRHPD) is disordered. Residues 48–79 (EKPDSLSEDTSHGTEGTPHKFDQEASTSRHPD) are compositionally biased toward basic and acidic residues. Residues 78 to 141 (PDKIQRRLAQ…NGVDTNALSF (64 aa)) form the bZIP domain. Coiled-coil stretches lie at residues 79–127 (DKIQ…RQQG) and 257–277 (NLRQ…EKLQ). Residues 80–100 (KIQRRLAQNREAARKSRLRKK) are basic motif. The tract at residues 106–120 (LETSRLKLIHLEQEL) is leucine-zipper. One can recognise a DOG1 domain in the interval 149–359 (IVAFEMEYGH…RALSSSWAAR (211 aa)). The cysteines at positions 256 and 262 are disulfide-linked.

The protein belongs to the bZIP family. In terms of assembly, binds DNA as a dimer. Interaction with the Dof domain proteins OBP1, OBP2 or OBP3 enhances the binding to the ocs element. Interacts with RAP2-3/EPB, an ethylene-responsive element binding protein. The reduced form interacts with NPR1. Predominantly expressed in roots.

The protein resides in the nucleus. Its function is as follows. Transcriptional activator that binds specifically to the DNA sequence 5'-TGACG-3'. Recognizes ocs elements like the as-1 motif of the cauliflower mosaic virus 35S promoter. Binding to the as-1-like cis elements mediate auxin- and salicylic acid-inducible transcription. May be involved in the induction of the systemic acquired resistance (SAR) via its interaction with NPR1. Could also bind to the Hex-motif (5'-TGACGTGG-3') another cis-acting element found in plant histone promoters. The polypeptide is Transcription factor TGA4 (TGA4) (Arabidopsis thaliana (Mouse-ear cress)).